The following is a 78-amino-acid chain: uncharacterized protein (78 aa).

Transmembrane regions (helical) follow at residues 12–32 and 51–71; these read LVSV…ICVV and GVGA…VAVH.

The protein resides in the cell membrane. This is an uncharacterized protein from Treponema pallidum (strain Nichols).